The primary structure comprises 844 residues: 3',5'-cyclic-AMP phosphodiesterase 4A (844 aa).

The disordered stretch occupies residues 1–124; it reads MEPPAAPSER…RSPLDSQASP (124 aa). At Ser-13 the chain carries Phosphoserine. Residues 36–46 are compositionally biased toward low complexity; it reads QPRTPIRIQQR. The segment covering 51–78 has biased composition (basic and acidic residues); sequence SAERSEPERSPHRPIERADAVDTGDRPG. Residues 82–91 are compositionally biased toward polar residues; the sequence is TRMSWPSSFH. Phosphoserine occurs at positions 147, 152, 160, 204, and 333. Positions 343–672 constitute a PDEase domain; it reads VKTDQEDLLA…DWYHSAIRQS (330 aa). Lys-344 is covalently cross-linked (Glycyl lysine isopeptide (Lys-Gly) (interchain with G-Cter in SUMO)). The Proton donor role is filled by His-419. His-419 lines the 3',5'-cyclic AMP pocket. Residues His-419 and His-423 each contribute to the AMP site. Residues His-423, His-459, Asp-460, and Asp-577 each coordinate Zn(2+). AMP contacts are provided by Asp-460, Asp-577, Gln-628, and Phe-631. Position 460 (Asp-460) interacts with Mg(2+). Position 460 (Asp-460) interacts with Mn(2+). Gln-628 and Phe-631 together coordinate 3',5'-cyclic AMP. Phosphoserine occurs at positions 672 and 674. The tract at residues 819–844 is disordered; sequence ACSGTSGDNSAVISAPGRWGSGGDPA. Over residues 820 to 830 the composition is skewed to polar residues; sequence CSGTSGDNSAV.

This sequence belongs to the cyclic nucleotide phosphodiesterase family. PDE4 subfamily. As to quaternary structure, interacts with LYN (via SH3 domain). Interacts with ARRB2. Requires Zn(2+) as cofactor. Mg(2+) is required as a cofactor. It depends on Mn(2+) as a cofactor. Proteolytically cleaved by CASP3.

It localises to the cytoplasm. The protein localises to the cytosol. It is found in the membrane. It catalyses the reaction 3',5'-cyclic AMP + H2O = AMP + H(+). The protein operates within purine metabolism; 3',5'-cyclic AMP degradation; AMP from 3',5'-cyclic AMP: step 1/1. Its activity is regulated as follows. Inhibited by rolipram and diazepam. Hydrolyzes the second messenger 3',5'-cyclic AMP (cAMP), which is a key regulator of many important physiological processes. In terms of biological role, efficiently hydrolyzes cAMP. The chain is 3',5'-cyclic-AMP phosphodiesterase 4A (Pde4a) from Mus musculus (Mouse).